Consider the following 1462-residue polypeptide: DNA polymerase alpha catalytic subunit (1462 aa).

Disordered stretches follow at residues 1-33 and 98-123; these read MAPV…GRQE and DLED…KRNV. The span at 20 to 29 shows a compositional bias: basic residues; that stretch reads RARREKKSKK. Positions 106 to 116 are enriched in basic and acidic residues; it reads ADEKGKDGKAR. Threonine 174 is subject to Phosphothreonine. A phosphoserine mark is found at serine 186, serine 190, and serine 209. N6-acetyllysine is present on lysine 224. Positions 232-251 are disordered; it reads DVQVESTEEEQESGAMEFED. Phosphothreonine is present on threonine 406. Residues 650 to 715 are DNA-binding; the sequence is RINVCKAPHW…YHLSELVQQI (66 aa). Lysine 970 is subject to N6-succinyllysine. Residues 1245 to 1376 are DNA-binding; that stretch reads QFRVHHYHKD…TGPLCPACMK (132 aa). Zn(2+) is bound by residues cysteine 1283, cysteine 1286, cysteine 1310, cysteine 1315, cysteine 1348, cysteine 1353, cysteine 1371, and cysteine 1374. The CysA-type zinc-finger motif lies at 1283–1318; it reads CPTCGTENIYDNVFDGSGTDMEPSLYRCSNIDCKAS. The short motif at 1348–1374 is the CysB motif element; that stretch reads CEEPTCRNRTRHLPLQFSRTGPLCPAC.

This sequence belongs to the DNA polymerase type-B family. In terms of assembly, component of the alpha DNA polymerase complex (also known as the alpha DNA polymerase-primase complex) consisting of four subunits: the catalytic subunit POLA1, the regulatory subunit POLA2, and the primase complex subunits PRIM1 and PRIM2 respectively. Interacts with PARP1; this interaction functions as part of the control of replication fork progression. Interacts with MCM10 and WDHD1; these interactions recruit the polymerase alpha complex to the pre-replicative complex bound to DNA. Interacts with RPA1; this interaction stabilizes the replicative complex and reduces the misincorporation rate of DNA polymerase alpha by acting as a fidelity clamp. As to quaternary structure, (Microbial infection) Interacts with SV40 Large T antigen; this interaction allows viral DNA replication. (Microbial infection) Interacts with herpes simplex virus 1/HHV-1 replication origin-binding protein UL9. Post-translationally, a 165 kDa form is probably produced by proteolytic cleavage at Lys-124.

The protein localises to the nucleus. It localises to the cytoplasm. The protein resides in the cytosol. The catalysed reaction is DNA(n) + a 2'-deoxyribonucleoside 5'-triphosphate = DNA(n+1) + diphosphate. Autoinhibited in apo-primosome, where the zinc motif of POLA1 and oligonucleotide/olicosaccharide-binding domain of POLA2 are placed into the active site blocking RNA:DNA duplex entry. Its function is as follows. Catalytic subunit of the DNA polymerase alpha complex (also known as the alpha DNA polymerase-primase complex) which plays an essential role in the initiation of DNA synthesis. During the S phase of the cell cycle, the DNA polymerase alpha complex (composed of a catalytic subunit POLA1, a regulatory subunit POLA2 and two primase subunits PRIM1 and PRIM2) is recruited to DNA at the replicative forks via direct interactions with MCM10 and WDHD1. The primase subunit of the polymerase alpha complex initiates DNA synthesis by oligomerising short RNA primers on both leading and lagging strands. These primers are initially extended by the polymerase alpha catalytic subunit and subsequently transferred to polymerase delta and polymerase epsilon for processive synthesis on the lagging and leading strand, respectively. The reason this transfer occurs is because the polymerase alpha has limited processivity and lacks intrinsic 3' exonuclease activity for proofreading error, and therefore is not well suited for replicating long complexes. In the cytosol, responsible for a substantial proportion of the physiological concentration of cytosolic RNA:DNA hybrids, which are necessary to prevent spontaneous activation of type I interferon responses. In Homo sapiens (Human), this protein is DNA polymerase alpha catalytic subunit (POLA1).